A 404-amino-acid polypeptide reads, in one-letter code: Probable sugar efflux transporter (404 aa).

The next 12 helical transmembrane spans lie at 15–35 (VITF…PVAL), 51–71 (GLII…FMLL), 85–105 (LVLF…WVLV), 109–129 (IGVA…VIRV), 137–157 (QAIG…LPLG), 168–188 (ATFA…YQLL), 209–229 (PLLL…FTAY), 245–265 (SMAT…SLLF), 276–296 (FILF…IASQ), 299–319 (WTMF…GLGL), 333–353 (VAMA…ALLG), and 363–383 (AYIG…FILV).

Belongs to the major facilitator superfamily. SotB (TC 2.A.1.2) family.

The protein localises to the cell inner membrane. In terms of biological role, involved in the efflux of sugars. The physiological role may be the reduction of the intracellular concentration of toxic sugars or sugar metabolites. This Pasteurella multocida (strain Pm70) protein is Probable sugar efflux transporter.